A 380-amino-acid polypeptide reads, in one-letter code: Cytochrome b (380 aa).

The next 4 membrane-spanning stretches (helical) occupy residues 33 to 53 (FGSL…FLAM), 77 to 98 (WLIR…FLHV), 113 to 133 (WNMG…GYVL), and 178 to 198 (FFAF…VHLL). Residues His-83 and His-97 each coordinate heme. Heme-binding residues include His-182 and His-196. Residue His-201 coordinates a ubiquinone. The next 4 membrane-spanning stretches (helical) occupy residues 226–246 (VKDF…TLFF), 288–308 (LGGV…PLLH), 320–340 (ITQT…WIGG), and 347–367 (FIII…IFMP).

This sequence belongs to the cytochrome b family. In terms of assembly, the cytochrome bc1 complex contains 11 subunits: 3 respiratory subunits (MT-CYB, CYC1 and UQCRFS1), 2 core proteins (UQCRC1 and UQCRC2) and 6 low-molecular weight proteins (UQCRH/QCR6, UQCRB/QCR7, UQCRQ/QCR8, UQCR10/QCR9, UQCR11/QCR10 and a cleavage product of UQCRFS1). This cytochrome bc1 complex then forms a dimer. Heme serves as cofactor.

The protein resides in the mitochondrion inner membrane. Functionally, component of the ubiquinol-cytochrome c reductase complex (complex III or cytochrome b-c1 complex) that is part of the mitochondrial respiratory chain. The b-c1 complex mediates electron transfer from ubiquinol to cytochrome c. Contributes to the generation of a proton gradient across the mitochondrial membrane that is then used for ATP synthesis. The polypeptide is Cytochrome b (MT-CYB) (Microtus arvalis (Common vole)).